We begin with the raw amino-acid sequence, 279 residues long: MQKAGRLLGGWTQAWMSVRMASSGLTRRNPLSNKVALVTASTDGIGFAIARRLAEDGAHVVVSSRKQQNVDRAVATLQGEGLSVTGIVCHVGKAEDREKLITTALKRHQGIDILVSNAAVNPFFGNLMDVTEEVWDKVLSINVTATAMMIKAVVPEMEKRGGGSVVIVGSVAGFTRFPSLGPYNVSKTALLGLTKNFAAELAPKNIRVNCLAPGLIKTRFSSVLWEEKAREDFIKEAMQIRRLGKPEDCAGIVSFLCSEDASYINGETVVVGGGTPSRL.

37–61 (LVTASTDGIGFAIARRLAEDGAHVV) contributes to the NADP(+) binding site. K93 is subject to N6-acetyllysine; alternate. An N6-succinyllysine; alternate modification is found at K93. N6-acetyllysine is present on K106. S170 serves as a coordination point for substrate. Residue Y183 is the Proton acceptor of the active site. K187 contributes to the NADP(+) binding site. K217 is modified (N6-acetyllysine; alternate). K217 is modified (N6-succinyllysine; alternate). S221 carries the phosphoserine modification. K228 and K235 each carry N6-succinyllysine. A Peroxisomal targeting signal motif is present at residues 277-279 (SRL).

Belongs to the short-chain dehydrogenases/reductases (SDR) family. In terms of assembly, homotetramer.

It localises to the peroxisome. The enzyme catalyses a secondary alcohol + NADP(+) = a ketone + NADPH + H(+). The catalysed reaction is 3alpha-hydroxy-5beta-pregnan-20-one + NADP(+) = 5beta-pregnan-3,20-dione + NADPH + H(+). It carries out the reaction 5beta-dihydrotestosterone + NADPH + H(+) = 5beta-androstane-3alpha,17beta-diol + NADP(+). It catalyses the reaction all-trans-retinol + NADP(+) = all-trans-retinal + NADPH + H(+). The enzyme catalyses isatin + NADPH + H(+) = 3-hydroxyindolin-2-one + NADP(+). In terms of biological role, NADPH-dependent oxidoreductase which catalyzes the reduction of a variety of compounds bearing carbonyl groups including ketosteroids, alpha-dicarbonyl compounds, aldehydes, aromatic ketones and quinones. Reduces all-trans-retinal and 9-cis retinal. Reduces 3-ketosteroids and benzil into 3alpha-hydroxysteroids and S-benzoin, respectively, in contrast to the stereoselectivity of primates DHRS4s which produce 3beta-hydroxysteroids and R-benzoin. In the reverse reaction, catalyzes the NADP-dependent oxidation of 3alpha-hydroxysteroids and alcohol, but with much lower efficiency. Involved in the metabolism of 3alpha-hydroxysteroids, retinoid, isatin and xenobiotic carbonyl compounds. This chain is Dehydrogenase/reductase SDR family member 4, found in Mus musculus (Mouse).